The chain runs to 874 residues: Ectonucleotide pyrophosphatase/phosphodiesterase family member 3 (874 aa).

Over 1-11 (MQSTLNLSTEE) the chain is Cytoplasmic. The helical; Signal-anchor for type II membrane protein transmembrane segment at 12-30 (PVKRNTVKKYKIICIVLLI) threads the bilayer. Over 31–874 (LLVAVSLALG…TYLPVFETVI (844 aa)) the chain is Extracellular. 2 consecutive SMB domains span residues 50–93 (EQGS…VQST) and 94–138 (QIWT…GETS). 10 disulfide bridges follow: Cys-54/Cys-71, Cys-58/Cys-89, Cys-69/Cys-82, Cys-75/Cys-81, Cys-98/Cys-115, Cys-103/Cys-133, Cys-113/Cys-126, Cys-119/Cys-125, Cys-144/Cys-190, and Cys-152/Cys-364. Positions 78–80 (RGD) match the Cell attachment site motif. Residues 160–544 (PVILFSMDGF…HGSLNHLLKV (385 aa)) form a phosphodiesterase region. Asp-167 contacts Zn(2+). Lys-204 is an ATP binding site. Residue Thr-205 coordinates Zn(2+). The active-site Nucleophile is Thr-205. Residue Asn-226 participates in ATP binding. N-linked (GlcNAc...) asparagine glycosylation is present at Asn-236. Residue Asp-275 participates in ATP binding. N-linked (GlcNAc...) asparagine glycosylation occurs at Asn-279. Tyr-289 contacts ATP. A glycan (N-linked (GlcNAc...) asparagine) is linked at Asn-290. Residues Asp-325, His-329, Asp-372, and His-373 each coordinate Zn(2+). Disulfide bonds link Cys-380-Cys-477, Cys-428-Cys-817, Cys-561-Cys-622, Cys-574-Cys-678, Cys-576-Cys-663, and Cys-786-Cys-796. Asn-425 is a glycosylation site (N-linked (GlcNAc...) asparagine). His-482 contacts Zn(2+). Asn-532 carries an N-linked (GlcNAc...) asparagine glycan. Positions 581–874 (TNSDLERVNQ…TYLPVFETVI (294 aa)) are nuclease. 3 N-linked (GlcNAc...) asparagine glycosylation sites follow: Asn-677, Asn-686, and Asn-698. The Ca(2+) site is built by Asp-751, Asp-755, His-757, and Asp-759. N-linked (GlcNAc...) asparagine glycosylation is found at Asn-770, Asn-788, and Asn-820.

Belongs to the nucleotide pyrophosphatase/phosphodiesterase family. In terms of assembly, monomer and homodimer. The cofactor is Zn(2+). In terms of processing, N-glycosylated. N-glycosylation is necessary for normal transport to the cell membrane, but is not the apical targeting signal.

The protein resides in the cell membrane. It localises to the apical cell membrane. Its subcellular location is the secreted. It catalyses the reaction a ribonucleoside 5'-triphosphate + H2O = a ribonucleoside 5'-phosphate + diphosphate + H(+). It carries out the reaction ATP + H2O = AMP + diphosphate + H(+). The catalysed reaction is CTP + H2O = CMP + diphosphate + H(+). The enzyme catalyses GTP + H2O = GMP + diphosphate + H(+). It catalyses the reaction UTP + H2O = UMP + diphosphate + H(+). It carries out the reaction UDP-N-acetyl-alpha-D-glucosamine + H2O = N-acetyl-alpha-D-glucosamine 1-phosphate + UMP + 2 H(+). The catalysed reaction is P(1),P(3)-bis(5'-adenosyl) triphosphate + H2O = AMP + ADP + 2 H(+). The enzyme catalyses P(1),P(4)-bis(5'-adenosyl) tetraphosphate + H2O = AMP + ATP + 2 H(+). It catalyses the reaction P(1),P(5)-bis(5'-adenosyl) pentaphosphate + H2O = adenosine 5'-tetraphosphate + AMP + 2 H(+). It carries out the reaction P(1),P(4)-bis(5'-guanosyl) tetraphosphate + H2O = GMP + GTP + 2 H(+). The catalysed reaction is Hydrolytically removes 5'-nucleotides successively from the 3'-hydroxy termini of 3'-hydroxy-terminated oligonucleotides.. Its function is as follows. Hydrolase that metabolizes extracellular nucleotides, including ATP, GTP, UTP and CTP. Limits mast cells and basophils response during inflammation and during the chronic phases of allergic responses by eliminating extracellular ATP, a signaling molecule activating these cells in an autocrine manner. Metabolizes extracellular ATP in the lumen of the small intestine, and thereby prevents ATP-induced apoptosis of intestinal plasmacytoid dendritic cells. Has a broad specificity and can also hydrolyze UDP-GlcNAc into UMP and GlcNAc-1-phosphate and potentially several other intracellular nucleotide sugars, including UDP-GalNAc, CMP-NeuAc, GDP-Fuc, and UDP-GlcA. Thereby, could modulate glycan biosynthesis and protein glycosylation. Can hydrolyze extracellular dinucleoside polyphosphates, including the vasoactive adenosine polyphosphates as well. In addition, displays an alkaline phosphodiesterase activity in vitro. This Bos taurus (Bovine) protein is Ectonucleotide pyrophosphatase/phosphodiesterase family member 3 (ENPP3).